The chain runs to 63 residues: Hyphancin-3E (63 aa).

The N-terminal stretch at 1-22 (MNFSRILFFVFTCFVALASVSG) is a signal peptide. The propeptide at 23–26 (APEP) is removed by a dipeptidylpeptidase. Leu-61 is subject to Leucine amide.

Belongs to the cecropin family.

Its subcellular location is the secreted. Its function is as follows. Has antibacterial activity. The protein is Hyphancin-3E of Hyphantria cunea (Fall webworm moth).